Here is a 106-residue protein sequence, read N- to C-terminus: Urease subunit beta (106 aa).

It belongs to the urease beta subunit family. As to quaternary structure, heterotrimer of UreA (gamma), UreB (beta) and UreC (alpha) subunits. Three heterotrimers associate to form the active enzyme.

It localises to the cytoplasm. It carries out the reaction urea + 2 H2O + H(+) = hydrogencarbonate + 2 NH4(+). It functions in the pathway nitrogen metabolism; urea degradation; CO(2) and NH(3) from urea (urease route): step 1/1. The chain is Urease subunit beta from Synechococcus sp. (strain CC9311).